We begin with the raw amino-acid sequence, 267 residues long: 2-keto-3-deoxy-L-rhamnonate aldolase (267 aa).

The Proton acceptor role is filled by His-49. Residue Gln-151 participates in substrate binding. Glu-153 lines the Mg(2+) pocket. Positions 178 and 179 each coordinate substrate. Position 179 (Asp-179) interacts with Mg(2+).

It belongs to the HpcH/HpaI aldolase family. KDR aldolase subfamily. As to quaternary structure, homohexamer. It depends on Mg(2+) as a cofactor.

The enzyme catalyses 2-dehydro-3-deoxy-L-rhamnonate = (S)-lactaldehyde + pyruvate. Functionally, catalyzes the reversible retro-aldol cleavage of 2-keto-3-deoxy-L-rhamnonate (KDR) to pyruvate and lactaldehyde. This chain is 2-keto-3-deoxy-L-rhamnonate aldolase, found in Klebsiella pneumoniae subsp. pneumoniae (strain ATCC 700721 / MGH 78578).